Consider the following 133-residue polypeptide: Salivary cystatin-L (133 aa).

Positions 1–19 (MTASFALVLLLGGVAVCIA) are cleaved as a signal peptide. A Cystatin domain is found at 29 to 115 (KANHQANPEY…VAQRTCTTVV (87 aa)).

The protein belongs to the cystatin family. In terms of tissue distribution, salivary gland.

The protein localises to the secreted. Inhibitor of cysteine proteinases. Inhibits host cathepsin L (CTSL) and S (CTSS). Modulates production of various cytokines and chemokines in lipopolysaccharide (LPS)-stimulated mouse dendritic cell. Suppresses maturation of mouse bone-marrow-derived dendritic cells (BMDCs). The sequence is that of Salivary cystatin-L from Ixodes persulcatus (Taiga tick).